The chain runs to 509 residues: Solute carrier family 2, facilitated glucose transporter member 4 (509 aa).

At 1 to 23 (MPSGFQQIGSDDGEPPRQRVTGT) the chain is on the cytoplasmic side. Residues 7-13 (QIGSDDG) form an interaction with SRFBP1 region. The residue at position 10 (Ser-10) is a Phosphoserine. A helical transmembrane segment spans residues 24-44 (LVLAVFSAVLGSLQFGYNIGV). Residues 45–80 (INAPQKVIEQSYNATWLGRQGPGGPDSIPQGTLTTL) are Extracellular-facing. N-linked (GlcNAc...) asparagine glycosylation occurs at Asn-57. The helical transmembrane segment at 81–101 (WALSVAIFSVGGMISSFLIGI) threads the bilayer. Topologically, residues 102 to 110 (ISQWLGRKR) are cytoplasmic. Residues 111–131 (AMLANNVLAVLGGALMGLANA) traverse the membrane as a helical segment. The Extracellular portion of the chain corresponds to 132-141 (AASYEILILG). A helical membrane pass occupies residues 142 to 162 (RFLIGAYSGLTSGLVPMYVGE). The Cytoplasmic segment spans residues 163–170 (IAPTHLRG). Residues 171–191 (ALGTLNQLAIVIGILVAQVLG) form a helical membrane-spanning segment. Gln-177 serves as a coordination point for D-glucose. At 192-200 (LESMLGTAT) the chain is on the extracellular side. The helical transmembrane segment at 201–221 (LWPLLLALTVLPALLQLILLP) threads the bilayer. The Cytoplasmic portion of the chain corresponds to 222 to 286 (FCPESPRYLY…QLLGSRTHRQ (65 aa)). Cys-223 is lipidated: S-palmitoyl cysteine. The residue at position 274 (Ser-274) is a Phosphoserine; by SGK1. Residues 287-307 (PLIIAVVLQLSQQLSGINAVF) form a helical membrane-spanning segment. D-glucose contacts are provided by residues 298–299 (QQ) and Asn-304. The Extracellular portion of the chain corresponds to 308–322 (YYSTSIFESAGVGQP). The chain crosses the membrane as a helical span at residues 323-343 (AYATIGAGVVNTVFTLVSVLL). D-glucose is bound at residue Asn-333. Over 344–352 (VERAGRRTL) the chain is Cytoplasmic. The helical transmembrane segment at 353 to 373 (HLLGLAGMCGCAILMTVALLL) threads the bilayer. Topologically, residues 374-384 (LERVPAMSYVS) are extracellular. The helical transmembrane segment at 385–405 (IVAIFGFVAFFEIGPGPIPWF) threads the bilayer. Residues Glu-396 and Trp-404 each contribute to the D-glucose site. Topologically, residues 406–416 (IVAELFSQGPR) are cytoplasmic. The helical transmembrane segment at 417–437 (PAAMAVAGFSNWTCNFIVGMG) threads the bilayer. Residues 438–444 (FQYVADA) lie on the Extracellular side of the membrane. A helical membrane pass occupies residues 445–465 (MGPYVFLLFAVLLLGFFIFTF). Residues 466–508 (LKVPETRGRTFDQISAAFRRTPSLLEQEVKPSTELEYLGPDEN) lie on the Cytoplasmic side of the membrane. Thr-486 carries the post-translational modification Phosphothreonine. Position 488 is a phosphoserine (Ser-488). Positions 489 to 490 (LL) match the Dileucine internalization motif motif.

Belongs to the major facilitator superfamily. Sugar transporter (TC 2.A.1.1) family. Glucose transporter subfamily. In terms of assembly, binds to DAXX. Interacts via its N-terminus with SRFBP1. Interacts with NDUFA9. Interacts with TRARG1; the interaction is required for proper SLC2A4 recycling after insulin stimulation. Post-translationally, sumoylated. Palmitoylated. Palmitoylation by ZDHHC7 controls the insulin-dependent translocation of GLUT4 to the plasma membrane. Expressed in skeletal and cardiac muscles. Expressed in brown and white adipose tissues.

Its subcellular location is the cell membrane. It is found in the endomembrane system. The protein resides in the cytoplasm. It localises to the perinuclear region. It carries out the reaction D-glucose(out) = D-glucose(in). Its function is as follows. Insulin-regulated facilitative glucose transporter, which plays a key role in removal of glucose from circulation. Response to insulin is regulated by its intracellular localization: in the absence of insulin, it is efficiently retained intracellularly within storage compartments in muscle and fat cells. Upon insulin stimulation, translocates from these compartments to the cell surface where it transports glucose from the extracellular milieu into the cell. This Mus musculus (Mouse) protein is Solute carrier family 2, facilitated glucose transporter member 4.